A 358-amino-acid chain; its full sequence is B3 domain-containing transcription factor NGA3 (358 aa).

Residues 1–14 (MDLSLAPTTTTSSD) are compositionally biased toward polar residues. The disordered stretch occupies residues 1-45 (MDLSLAPTTTTSSDQEQDRDQELTSNIGASSSSGPSGNNNNLPMM). The span at 25–45 (SNIGASSSSGPSGNNNNLPMM) shows a compositional bias: low complexity. Residues 56-162 (FDKVVTPSDV…KLYIDWRHRP (107 aa)) constitute a DNA-binding region (TF-B3). The disordered stretch occupies residues 310 to 358 (EIGASSSSSSALRLNLSTDHDDDNDDGDDGDDDQFAKKGKSSLSLNFNP). The span at 329-342 (HDDDNDDGDDGDDD) shows a compositional bias: acidic residues.

It localises to the nucleus. In terms of biological role, regulates lateral organ growth. Functionally redundant with NGA1, NGA2 and NGA4. The chain is B3 domain-containing transcription factor NGA3 (NGA3) from Arabidopsis thaliana (Mouse-ear cress).